Reading from the N-terminus, the 293-residue chain is 33 kDa chaperonin (293 aa).

Disulfide bonds link cysteine 237–cysteine 239 and cysteine 271–cysteine 274.

It belongs to the HSP33 family. In terms of processing, under oxidizing conditions two disulfide bonds are formed involving the reactive cysteines. Under reducing conditions zinc is bound to the reactive cysteines and the protein is inactive.

It is found in the cytoplasm. Its function is as follows. Redox regulated molecular chaperone. Protects both thermally unfolding and oxidatively damaged proteins from irreversible aggregation. Plays an important role in the bacterial defense system toward oxidative stress. The polypeptide is 33 kDa chaperonin (Haemophilus influenzae (strain ATCC 51907 / DSM 11121 / KW20 / Rd)).